Here is a 210-residue protein sequence, read N- to C-terminus: Protein GrpE (210 aa).

The disordered stretch occupies residues 191–210 (KGGPKPAEAETNSVFDEKDA).

Belongs to the GrpE family. In terms of assembly, homodimer.

The protein resides in the cytoplasm. Functionally, participates actively in the response to hyperosmotic and heat shock by preventing the aggregation of stress-denatured proteins, in association with DnaK and GrpE. It is the nucleotide exchange factor for DnaK and may function as a thermosensor. Unfolded proteins bind initially to DnaJ; upon interaction with the DnaJ-bound protein, DnaK hydrolyzes its bound ATP, resulting in the formation of a stable complex. GrpE releases ADP from DnaK; ATP binding to DnaK triggers the release of the substrate protein, thus completing the reaction cycle. Several rounds of ATP-dependent interactions between DnaJ, DnaK and GrpE are required for fully efficient folding. The protein is Protein GrpE of Rhizobium etli (strain CIAT 652).